The primary structure comprises 1909 residues: NFX1-type zinc finger-containing protein 1 (1909 aa).

2 stretches are compositionally biased toward basic and acidic residues: residues 1 to 12 (MEDRRPHLEARP) and 76 to 107 (RNQE…EGRS). 2 disordered regions span residues 1–133 (MEDR…QPQQ) and 787–813 (TQSA…EEEG). Positions 113–122 (SSDTFQQWHT) are enriched in polar residues. The segment covering 802–813 (EGEEEEEGEEEG) has biased composition (acidic residues). Positions 939-964 (RRRILSYERQYRTWAERMAELRLQED) form a coiled coil. 4 NF-X1-type zinc fingers span residues 1291 to 1313 (CGHV…QCMK), 1375 to 1393 (CGHR…LCSE), 1433 to 1455 (CGHP…RCQQ), and 1463 to 1480 (CSHK…PCQR). Residues 1733 to 1764 (LAKKRLSFSSQELSDLQSEIQRLTYLVNLLMR) are a coiled coil. The segment at 1818–1889 (ISDEERVQIV…LASEMDGAQH (72 aa)) adopts an RZ-type zinc-finger fold. Cys1840, His1844, Cys1860, and Cys1863 together coordinate Zn(2+).

The protein belongs to the ZNFX1 family. Interacts with MAVS.

It localises to the mitochondrion outer membrane. The protein localises to the cytoplasm. The protein resides in the stress granule. Its function is as follows. RNA-binding protein that initiates the antiviral response and is required to restrict the replication of RNA viruses. Acts as a double-stranded RNA (dsRNA) sensor that recognizes viral RNA and then interacts with MAVS to initiate the type I interferon response. Also required for immunity against some bacteria, such as mycobacteria. This is NFX1-type zinc finger-containing protein 1 from Mus musculus (Mouse).